A 154-amino-acid chain; its full sequence is Interleukin-7 (154 aa).

Residues Met1–Ser25 form the signal peptide. Intrachain disulfides connect Cys27/Cys145, Cys58/Cys133, and Cys71/Cys116. N-linked (GlcNAc...) asparagine glycosylation is found at Asn94 and Asn115.

It belongs to the IL-7/IL-9 family. Interacts with IL7R and CSF2RG. Post-translationally, three disulfide bonds are present.

The protein localises to the secreted. Functionally, hematopoietic cytokine that plays an essential role in the development, expansion, and survival of naive and memory T-cells and B-cells thereby regulating the number of mature lymphocytes and maintaining lymphoid homeostasis. Mechanistically, exerts its biological effects through a receptor composed of IL7RA subunit and the cytokine receptor common subunit gamma/CSF2RG. Binding to the receptor leads to activation of various kinases including JAK1 or JAK3 depending on the cell type and subsequently propagation of signals through activation of several downstream signaling pathways including the PI3K/Akt/mTOR or the JAK-STAT5. This chain is Interleukin-7 (Il7), found in Rattus norvegicus (Rat).